A 383-amino-acid chain; its full sequence is uncharacterized protein (383 aa).

2 consecutive transmembrane segments (helical) span residues 49 to 69 and 347 to 367; these read VDLLAAVQASVEPAALIGCVA and LLGGIPLAGFFAAGEIGPVAG.

The protein to M.tuberculosis Rv0874c.

Its subcellular location is the cell membrane. This is an uncharacterized protein from Mycobacterium tuberculosis (strain CDC 1551 / Oshkosh).